The following is an 81-amino-acid chain: Sulfur carrier protein TusA (81 aa).

Cysteine 19 serves as the catalytic Cysteine persulfide intermediate.

Belongs to the sulfur carrier protein TusA family. As to quaternary structure, interacts with IscS.

Its subcellular location is the cytoplasm. Its pathway is tRNA modification. In terms of biological role, sulfur carrier protein involved in sulfur trafficking in the cell. Part of a sulfur-relay system required for 2-thiolation during synthesis of 2-thiouridine of the modified wobble base 5-methylaminomethyl-2-thiouridine (mnm(5)s(2)U) in tRNA. Interacts with IscS and stimulates its cysteine desulfurase activity. Accepts an activated sulfur from IscS, which is then transferred to TusD, and thus determines the direction of sulfur flow from IscS to 2-thiouridine formation. Also appears to be involved in sulfur transfer for the biosynthesis of molybdopterin. The polypeptide is Sulfur carrier protein TusA (Escherichia coli (strain SMS-3-5 / SECEC)).